A 376-amino-acid polypeptide reads, in one-letter code: Secreted LysM effector LysM9 (376 aa).

The signal sequence occupies residues 1-25; sequence MGHFHLSNFIALIGILLVGPTATSG. The LysM domain occupies 41–89; the sequence is SKYVVQAGETCSAIAQAHSITTADIETYNAQSWAWTGCGQISQGDFICL. The disordered stretch occupies residues 190 to 219; the sequence is SSETSSSMTTSTSATTSVPTTTSTTTTTKT.

Belongs to the secreted LysM effector family.

It is found in the secreted. In terms of biological role, secreted LysM effector that might have a role in sequestration of chitin oligosaccharides (breakdown products of fungal cell walls that are released during invasion and act as triggers of host immunity) to dampen host defense. This chain is Secreted LysM effector LysM9, found in Penicillium expansum (Blue mold rot fungus).